The sequence spans 87 residues: Small ribosomal subunit protein bS20 (87 aa).

The interval 1–22 is disordered; the sequence is MANSPQAKKRARQNEKRFAINK.

It belongs to the bacterial ribosomal protein bS20 family.

Its function is as follows. Binds directly to 16S ribosomal RNA. In Ruegeria sp. (strain TM1040) (Silicibacter sp.), this protein is Small ribosomal subunit protein bS20.